The chain runs to 233 residues: Antiholin-like protein LrgB (233 aa).

Helical transmembrane passes span 5 to 25, 33 to 53, 63 to 83, 97 to 117, 152 to 172, and 212 to 232; these read LGIN…VIAT, GFFL…FLKL, IGGD…AIPL, IFGG…LVAI, LTSL…AKIV, and IAVV…APIL.

This sequence belongs to the CidB/LrgB family. LrgB subfamily.

The protein resides in the cell membrane. In terms of biological role, inhibits the expression or activity of extracellular murein hydrolases by interacting, possibly with LrgA, with the holin-like proteins CidA and/or CidB. The LrgAB and CidAB proteins may affect the proton motive force of the membrane. May be involved in programmed cell death (PCD), possibly triggering PCD in response to antibiotics and environmental stresses. This chain is Antiholin-like protein LrgB, found in Staphylococcus epidermidis (strain ATCC 12228 / FDA PCI 1200).